The primary structure comprises 214 residues: A-type ATP synthase subunit D (214 aa).

It belongs to the V-ATPase D subunit family. In terms of assembly, has multiple subunits with at least A(3), B(3), C, D, E, F, H, I and proteolipid K(x).

It is found in the cell membrane. Functionally, component of the A-type ATP synthase that produces ATP from ADP in the presence of a proton gradient across the membrane. This is A-type ATP synthase subunit D from Desulfurococcus sp. (strain SY).